The following is a 521-amino-acid chain: Vang-like protein 2 (521 aa).

The interval 1–81 (MDNDSQYSGY…TTVVTGTSEH (81 aa)) is disordered. Residues 1-108 (MDNDSQYSGY…AKLDCSRHLG (108 aa)) lie on the Cytoplasmic side of the membrane. The segment covering 15–33 (GHSRSSRKHRDRRERHRSK) has biased composition (basic residues). The segment covering 57-67 (ESTRGEDRDDN) has biased composition (basic and acidic residues). Low complexity predominate over residues 69-81 (GETTTVVTGTSEH). The chain crosses the membrane as a helical span at residues 109–129 (VVIGGALALLSFLTPIAFMLL). The Extracellular portion of the chain corresponds to 130–147 (PQILWREDLEQCGTACEG). A helical membrane pass occupies residues 148-168 (LFISVAFKLLILLLGSWALFF). The Cytoplasmic segment spans residues 169–178 (RRPKAFFPRV). The helical transmembrane segment at 179–199 (FVFRALLMVLVFLLVVSYWLF) threads the bilayer. The Extracellular portion of the chain corresponds to 200 to 218 (YGVRILESRDKNYQGIVQY). The chain crosses the membrane as a helical span at residues 219–239 (AVSLVDALLFVHYLAVVLLEL). The Cytoplasmic segment spans residues 240-521 (RQLQPQFTVK…VMRLQSETSV (282 aa)). Residues 518–521 (ETSV) carry the PDZ-binding motif.

Belongs to the Vang family. Interacts with dvl/dsh. Interacts with prickle3.

It localises to the cell membrane. Its function is as follows. Has a role in non-canonical Wnt/planar cell polarity (PCP) signaling; can recruit dvl/dsh and prickle from the cytoplasm to the plasma membrane. Acts in a PCP complex to regulate the polarized assembly of fibronectrin on the surface of the mesoderm during gastrulation. Regulates convergent extension in both dorsal mesoderm and neural tissue without affecting cell fate. Regulates neural fold closure during neurulation. May be required for cell surface localization of fzd3 and fzd6 in the inner ear. This is Vang-like protein 2 from Xenopus tropicalis (Western clawed frog).